The sequence spans 220 residues: Deoxyribose-phosphate aldolase 2 (220 aa).

Asp89 (proton donor/acceptor) is an active-site residue. Residue Lys151 is the Schiff-base intermediate with acetaldehyde of the active site. Lys180 functions as the Proton donor/acceptor in the catalytic mechanism.

Belongs to the DeoC/FbaB aldolase family. DeoC type 1 subfamily.

Its subcellular location is the cytoplasm. It carries out the reaction 2-deoxy-D-ribose 5-phosphate = D-glyceraldehyde 3-phosphate + acetaldehyde. Its pathway is carbohydrate degradation; 2-deoxy-D-ribose 1-phosphate degradation; D-glyceraldehyde 3-phosphate and acetaldehyde from 2-deoxy-alpha-D-ribose 1-phosphate: step 2/2. In terms of biological role, catalyzes a reversible aldol reaction between acetaldehyde and D-glyceraldehyde 3-phosphate to generate 2-deoxy-D-ribose 5-phosphate. The chain is Deoxyribose-phosphate aldolase 2 from Staphylococcus aureus (strain MSSA476).